A 100-amino-acid chain; its full sequence is Urease subunit gamma (100 aa).

Belongs to the urease gamma subunit family. As to quaternary structure, heterotrimer of UreA (gamma), UreB (beta) and UreC (alpha) subunits. Three heterotrimers associate to form the active enzyme.

The protein localises to the cytoplasm. The enzyme catalyses urea + 2 H2O + H(+) = hydrogencarbonate + 2 NH4(+). It functions in the pathway nitrogen metabolism; urea degradation; CO(2) and NH(3) from urea (urease route): step 1/1. The sequence is that of Urease subunit gamma from Escherichia coli.